The primary structure comprises 350 residues: Phenylalanine--tRNA ligase alpha subunit (350 aa).

Glu271 provides a ligand contact to Mg(2+).

Belongs to the class-II aminoacyl-tRNA synthetase family. Phe-tRNA synthetase alpha subunit type 1 subfamily. Tetramer of two alpha and two beta subunits. It depends on Mg(2+) as a cofactor.

It localises to the cytoplasm. The catalysed reaction is tRNA(Phe) + L-phenylalanine + ATP = L-phenylalanyl-tRNA(Phe) + AMP + diphosphate + H(+). The chain is Phenylalanine--tRNA ligase alpha subunit from Delftia acidovorans (strain DSM 14801 / SPH-1).